A 550-amino-acid chain; its full sequence is Hydroxylamine reductase (550 aa).

Residues cysteine 3, cysteine 6, cysteine 18, and cysteine 25 each contribute to the [2Fe-2S] cluster site. Hybrid [4Fe-2O-2S] cluster contacts are provided by histidine 249, glutamate 273, cysteine 317, cysteine 405, cysteine 433, cysteine 458, glutamate 492, and lysine 494. Cysteine 405 carries the cysteine persulfide modification.

It belongs to the HCP family. It depends on [2Fe-2S] cluster as a cofactor. Hybrid [4Fe-2O-2S] cluster serves as cofactor.

The protein localises to the cytoplasm. It carries out the reaction A + NH4(+) + H2O = hydroxylamine + AH2 + H(+). Functionally, catalyzes the reduction of hydroxylamine to form NH(3) and H(2)O. The protein is Hydroxylamine reductase of Proteus mirabilis (strain HI4320).